We begin with the raw amino-acid sequence, 282 residues long: Protein DOG1-like 3 (282 aa).

The DOG1 domain maps to 11 to 254 (EQLQKGCYYE…HEWGRVREEQ (244 aa)).

This is Protein DOG1-like 3 from Arabidopsis thaliana (Mouse-ear cress).